Reading from the N-terminus, the 257-residue chain is Ditrans,polycis-undecaprenyl-diphosphate synthase ((2E,6E)-farnesyl-diphosphate specific) (257 aa).

Residue aspartate 24 is part of the active site. Aspartate 24 contributes to the Mg(2+) binding site. Substrate is bound by residues 25–28 (GNGR), tryptophan 29, arginine 37, histidine 41, and 69–71 (SSE). The Proton acceptor role is filled by asparagine 72. Substrate-binding positions include tryptophan 73, arginine 75, arginine 192, and 198–200 (RIS). Glutamate 211 serves as a coordination point for Mg(2+).

The protein belongs to the UPP synthase family. Homodimer. Mg(2+) is required as a cofactor.

It carries out the reaction 8 isopentenyl diphosphate + (2E,6E)-farnesyl diphosphate = di-trans,octa-cis-undecaprenyl diphosphate + 8 diphosphate. Its function is as follows. Catalyzes the sequential condensation of isopentenyl diphosphate (IPP) with (2E,6E)-farnesyl diphosphate (E,E-FPP) to yield (2Z,6Z,10Z,14Z,18Z,22Z,26Z,30Z,34E,38E)-undecaprenyl diphosphate (di-trans,octa-cis-UPP). UPP is the precursor of glycosyl carrier lipid in the biosynthesis of bacterial cell wall polysaccharide components such as peptidoglycan and lipopolysaccharide. The polypeptide is Ditrans,polycis-undecaprenyl-diphosphate synthase ((2E,6E)-farnesyl-diphosphate specific) (Aliivibrio fischeri (strain ATCC 700601 / ES114) (Vibrio fischeri)).